The chain runs to 65 residues: Large ribosomal subunit protein bL33m (65 aa).

A mitochondrion-targeting transit peptide spans 1–8 (MFLSAVFF).

The protein belongs to the bacterial ribosomal protein bL33 family. As to quaternary structure, component of the mitochondrial large ribosomal subunit (mt-LSU). Mature mammalian 55S mitochondrial ribosomes consist of a small (28S) and a large (39S) subunit. The 28S small subunit contains a 12S ribosomal RNA (12S mt-rRNA) and 30 different proteins. The 39S large subunit contains a 16S rRNA (16S mt-rRNA), a copy of mitochondrial valine transfer RNA (mt-tRNA(Val)), which plays an integral structural role, and 52 different proteins.

Its subcellular location is the mitochondrion. The polypeptide is Large ribosomal subunit protein bL33m (MRPL33) (Homo sapiens (Human)).